Here is a 79-residue protein sequence, read N- to C-terminus: Cytochrome b (79 aa).

The next 3 helical transmembrane spans lie at 1–7, 31–52, and 67–79; these read SALFLAM, WLIR…YLHI, and WNIG…LTMA. The heme b site is built by histidine 37 and histidine 51.

It belongs to the cytochrome b family. As to quaternary structure, the cytochrome bc1 complex contains 11 subunits: 3 respiratory subunits (MT-CYB, CYC1 and UQCRFS1), 2 core proteins (UQCRC1 and UQCRC2) and 6 low-molecular weight proteins (UQCRH/QCR6, UQCRB/QCR7, UQCRQ/QCR8, UQCR10/QCR9, UQCR11/QCR10 and a cleavage product of UQCRFS1). This cytochrome bc1 complex then forms a dimer. Heme b serves as cofactor.

The protein localises to the mitochondrion inner membrane. Its function is as follows. Component of the ubiquinol-cytochrome c reductase complex (complex III or cytochrome b-c1 complex) that is part of the mitochondrial respiratory chain. The b-c1 complex mediates electron transfer from ubiquinol to cytochrome c. Contributes to the generation of a proton gradient across the mitochondrial membrane that is then used for ATP synthesis. The polypeptide is Cytochrome b (MT-CYB) (Dipodomys heermanni (Heermann's kangaroo rat)).